A 500-amino-acid polypeptide reads, in one-letter code: Cytochrome P450 2D26 (500 aa).

Ser249 bears the Phosphoserine mark. Cys446 contacts heme.

This sequence belongs to the cytochrome P450 family. Heme is required as a cofactor.

The protein localises to the endoplasmic reticulum membrane. Its subcellular location is the microsome membrane. It carries out the reaction an organic molecule + reduced [NADPH--hemoprotein reductase] + O2 = an alcohol + oxidized [NADPH--hemoprotein reductase] + H2O + H(+). Cytochromes P450 are a group of heme-thiolate monooxygenases. In liver microsomes, this enzyme is involved in an NADPH-dependent electron transport pathway. It oxidizes a variety of structurally unrelated compounds, including steroids, fatty acids, and xenobiotics. The chain is Cytochrome P450 2D26 (Cyp2d26) from Rattus norvegicus (Rat).